The primary structure comprises 160 residues: RNA-binding protein 3 (160 aa).

Positions 6–84 (GKLFVGGLNF…RQIRVDHAGK (79 aa)) constitute an RRM domain. Residue arginine 47 is modified to Omega-N-methylarginine. The segment at 81 to 116 (HAGKSARGSRGGAFGSYERGRGYPRGGGDQGYGSGR) is disordered. Residues 103 to 114 (YPRGGGDQGYGS) are compositionally biased toward gly residues. Arginine 105 carries the asymmetric dimethylarginine; alternate modification. Arginine 105 is subject to Dimethylated arginine; alternate. Arginine 105 is subject to Omega-N-methylarginine; alternate. Omega-N-methylarginine occurs at positions 120 and 134. The interval 135–160 (SRDYGGRSQGGYDRYSGGNYRDNYDN) is disordered. Residue serine 150 is modified to Phosphoserine. The residue at position 158 (tyrosine 158) is a Phosphotyrosine.

Interacts with RPL4. Associates with the 60S ribosomal subunits.

The protein resides in the nucleus. It localises to the cytoplasm. It is found in the cell projection. The protein localises to the dendrite. Cold-inducible mRNA binding protein that enhances global protein synthesis at both physiological and mild hypothermic temperatures. Reduces the relative abundance of microRNAs, when overexpressed. Enhances phosphorylation of translation initiation factors and active polysome formation. The chain is RNA-binding protein 3 from Capra hircus (Goat).